The chain runs to 74 residues: MKIYDAVVKTTFQISTSIFFDYIYFFDYKGMKMAEIFAVNNYTELKKIRRMITFGFTVLGLGIGMIFGDAGLDV.

The chain crosses the membrane as a helical span at residues 52–72; sequence ITFGFTVLGLGIGMIFGDAGL.

The protein localises to the membrane. This is an uncharacterized protein from Methanocaldococcus jannaschii (strain ATCC 43067 / DSM 2661 / JAL-1 / JCM 10045 / NBRC 100440) (Methanococcus jannaschii).